A 238-amino-acid polypeptide reads, in one-letter code: MEESINPIISIGPVIFNLTMLAMTLLIVGVIFVFIYWASRNMTLKPKGKQNILEYVYDFVIGFTEPNIGSRYMKDYSLFFLCLFLFMVIANNLGLMTKLQTIDGTNWWSSPTANLQYDLTLSFLVILLTHIESVRRRGFKKSIKSFMSPVFVIPMNILEEFTNFLSLALRIFGNIFAGEVMTSLLLLLSHQAIYWYPVAFGANLAWTAFSVFISCIQAYVFTLLTSVYLGNKINIEEE.

A run of 5 helical transmembrane segments spans residues 15–35 (IFNL…FVFI), 76–96 (YSLF…LGLM), 111–131 (PTAN…LTHI), 167–187 (LALR…LLLL), and 208–230 (AFSV…VYLG).

Belongs to the ATPase A chain family. F-type ATPases have 2 components, CF(1) - the catalytic core - and CF(0) - the membrane proton channel. CF(1) has five subunits: alpha(3), beta(3), gamma(1), delta(1), epsilon(1). CF(0) has three main subunits: a(1), b(2) and c(9-12). The alpha and beta chains form an alternating ring which encloses part of the gamma chain. CF(1) is attached to CF(0) by a central stalk formed by the gamma and epsilon chains, while a peripheral stalk is formed by the delta and b chains.

The protein resides in the cell membrane. Key component of the proton channel; it plays a direct role in the translocation of protons across the membrane. The chain is ATP synthase subunit a from Streptococcus pneumoniae serotype 19F (strain G54).